We begin with the raw amino-acid sequence, 950 residues long: Protein translocase subunit SecA 1 (950 aa).

Residues Q83, 101–105 (GEGKT), and D490 contribute to the ATP site. The disordered stretch occupies residues 864–950 (EGGAGRKNAA…AKPPKSVKKR (87 aa)). Residues 873 to 888 (AAREEAPSRLRAKGIE) show a composition bias toward basic and acidic residues.

The protein belongs to the SecA family. Monomer and homodimer. Part of the essential Sec protein translocation apparatus which comprises SecA, SecYEG and auxiliary proteins SecDF. Other proteins may also be involved.

The protein resides in the cell membrane. It localises to the cytoplasm. The enzyme catalyses ATP + H2O + cellular proteinSide 1 = ADP + phosphate + cellular proteinSide 2.. Functionally, part of the Sec protein translocase complex. Interacts with the SecYEG preprotein conducting channel. Has a central role in coupling the hydrolysis of ATP to the transfer of proteins into and across the cell membrane, serving as an ATP-driven molecular motor driving the stepwise translocation of polypeptide chains across the membrane. This is Protein translocase subunit SecA 1 from Mycobacterium ulcerans (strain Agy99).